The primary structure comprises 479 residues: Aspartyl/glutamyl-tRNA(Asn/Gln) amidotransferase subunit B (479 aa).

This sequence belongs to the GatB/GatE family. GatB subfamily. Heterotrimer of A, B and C subunits.

The catalysed reaction is L-glutamyl-tRNA(Gln) + L-glutamine + ATP + H2O = L-glutaminyl-tRNA(Gln) + L-glutamate + ADP + phosphate + H(+). It catalyses the reaction L-aspartyl-tRNA(Asn) + L-glutamine + ATP + H2O = L-asparaginyl-tRNA(Asn) + L-glutamate + ADP + phosphate + 2 H(+). In terms of biological role, allows the formation of correctly charged Asn-tRNA(Asn) or Gln-tRNA(Gln) through the transamidation of misacylated Asp-tRNA(Asn) or Glu-tRNA(Gln) in organisms which lack either or both of asparaginyl-tRNA or glutaminyl-tRNA synthetases. The reaction takes place in the presence of glutamine and ATP through an activated phospho-Asp-tRNA(Asn) or phospho-Glu-tRNA(Gln). The polypeptide is Aspartyl/glutamyl-tRNA(Asn/Gln) amidotransferase subunit B (Mycoplasma capricolum subsp. capricolum (strain California kid / ATCC 27343 / NCTC 10154)).